Reading from the N-terminus, the 504-residue chain is Hexokinase-10 (504 aa).

Residues Gly7–Ala29 traverse the membrane as a helical segment. Residues Asn39–Ala493 form the Hexokinase domain. The tract at residues Asp94 to Val226 is hexokinase small subdomain. Residues Gly108 and Thr109 each contribute to the ADP site. Residues Thr192, Lys193, Asn227, Asn254, Glu282, and Glu313 each contribute to the D-glucose site. The hexokinase large subdomain stretch occupies residues Asn227–Glu482. Gly447 serves as a coordination point for ADP.

It belongs to the hexokinase family. Expressed specifically in stamen.

Its subcellular location is the plastid. It localises to the chloroplast outer membrane. The enzyme catalyses a D-hexose + ATP = a D-hexose 6-phosphate + ADP + H(+). The catalysed reaction is D-fructose + ATP = D-fructose 6-phosphate + ADP + H(+). It catalyses the reaction D-glucose + ATP = D-glucose 6-phosphate + ADP + H(+). It participates in carbohydrate metabolism; hexose metabolism. It functions in the pathway carbohydrate degradation; glycolysis; D-glyceraldehyde 3-phosphate and glycerone phosphate from D-glucose: step 1/4. Fructose and glucose phosphorylating enzyme. This Oryza sativa subsp. japonica (Rice) protein is Hexokinase-10 (HXK10).